The sequence spans 197 residues: Imidazoleglycerol-phosphate dehydratase (197 aa).

It belongs to the imidazoleglycerol-phosphate dehydratase family.

The protein localises to the cytoplasm. The catalysed reaction is D-erythro-1-(imidazol-4-yl)glycerol 3-phosphate = 3-(imidazol-4-yl)-2-oxopropyl phosphate + H2O. It participates in amino-acid biosynthesis; L-histidine biosynthesis; L-histidine from 5-phospho-alpha-D-ribose 1-diphosphate: step 6/9. The chain is Imidazoleglycerol-phosphate dehydratase from Saccharophagus degradans (strain 2-40 / ATCC 43961 / DSM 17024).